A 437-amino-acid polypeptide reads, in one-letter code: MNFTTQMDAAKKGIITKEMKVVSQKEGVDVEILRELVAEGKIVIPANKNHKSLDAQGVGQGLKTKINVNLGISKDCANIDMELEKVKTAIEMKAEAIMDLSSYGKTEEFRKRIVEMCSVMIGTVPIYDAVGFYDKELSDISPEEFLAVVEKHAQDGVDFMTIHAGINRETAKVFKRNKRLTNIVSRGGSLLYAWMELNNKENPFYEYYDKVLDICARYDVTISLGDACRPGSINDSTDASQIKELITLGELTKRAWEKNVQVIVEGPGHMSLNEIAANMQLEKKLCHGAPFYVLGPLVTDIAPGYDHITSAIGGAIAAANGADFLCYVTPAEHLRLPNLEDMKEGIIASKIAAHAADVSNNIKGAKEWDYKMSEARKELNWEKMFDLAIDPEKARRYRRESTPEHEDTCTMCGKMCAVRNMNKVMEGKNINILREED.

Substrate is bound by residues Asn-69, Met-98, Tyr-127, His-163, 185–187 (SRG), 226–229 (DACR), and Glu-265. A Zn(2+)-binding site is contributed by His-269. Tyr-292 serves as a coordination point for substrate. Position 333 (His-333) interacts with Zn(2+). The [4Fe-4S] cluster site is built by Cys-409, Cys-412, and Cys-416.

Belongs to the ThiC family. [4Fe-4S] cluster serves as cofactor.

The catalysed reaction is 5-amino-1-(5-phospho-beta-D-ribosyl)imidazole + S-adenosyl-L-methionine = 4-amino-2-methyl-5-(phosphooxymethyl)pyrimidine + CO + 5'-deoxyadenosine + formate + L-methionine + 3 H(+). The protein operates within cofactor biosynthesis; thiamine diphosphate biosynthesis. In terms of biological role, catalyzes the synthesis of the hydroxymethylpyrimidine phosphate (HMP-P) moiety of thiamine from aminoimidazole ribotide (AIR) in a radical S-adenosyl-L-methionine (SAM)-dependent reaction. The polypeptide is Phosphomethylpyrimidine synthase (Clostridium kluyveri (strain NBRC 12016)).